The sequence spans 482 residues: Docking protein 1 (482 aa).

Met1 is modified (N-acetylmethionine). Residues 4–119 enclose the PH domain; sequence AVMEGPLFLQ…WVQTLCRTAF (116 aa). Ser48 bears the Phosphoserine mark. In terms of domain architecture, IRS-type PTB spans 151-259; the sequence is EGSQFWVTSQ…QQQKAQGKVG (109 aa). Phosphoserine occurs at positions 269 and 290. Residues 269 to 328 form a disordered region; the sequence is SHDGETEGKTVPPPVPQDPLGSPPALYAEPLDSLRIPPGPSQDSVYSDPLGSTPAGAGEG. Phosphotyrosine occurs at positions 295, 336, 340, 361, and 376. The interval 353 to 373 is disordered; that stretch reads TDSKEDPIYDEPEGLAPAPPR. Tyr397 carries the post-translational modification Phosphotyrosine; by INSR. The segment at 398–482 is disordered; the sequence is ELPYNPATDD…RAGVKSEGST (85 aa). Tyr408 is modified (phosphotyrosine). Positions 410-423 are enriched in pro residues; the sequence is VPPPRSPKPAPAPK. A Phosphoserine modification is found at Ser415. The span at 432–459 shows a compositional bias: polar residues; that stretch reads SGTTRGSGSKGFSSDTALYSQVQKSGTS. Phosphotyrosine is present on Tyr450.

This sequence belongs to the DOK family. Type A subfamily. As to quaternary structure, interacts with RasGAP, INPP5D/SHIP1 and ABL1. Interacts directly with phosphorylated ITGB3. Interacts with SRMS (via the SH2 and SH3 domains). Constitutively tyrosine-phosphorylated. Phosphorylated by TEC. Phosphorylated on tyrosine residues by the insulin receptor kinase. Results in the negative regulation of the insulin signaling pathway. Phosphorylated by LYN. Phosphorylated on tyrosine residues by SRMS. Expressed in lung, spleen, skeletal muscle and kidney.

It localises to the cytoplasm. It is found in the nucleus. DOK proteins are enzymatically inert adaptor or scaffolding proteins. They provide a docking platform for the assembly of multimolecular signaling complexes. DOK1 appears to be a negative regulator of the insulin signaling pathway. Modulates integrin activation by competing with talin for the same binding site on ITGB3. This Mus musculus (Mouse) protein is Docking protein 1 (Dok1).